The sequence spans 417 residues: Serine hydroxymethyltransferase (417 aa).

Residues L121 and 125-127 (GHL) each bind (6S)-5,6,7,8-tetrahydrofolate. N6-(pyridoxal phosphate)lysine is present on K229. 355-357 (SPF) serves as a coordination point for (6S)-5,6,7,8-tetrahydrofolate.

The protein belongs to the SHMT family. As to quaternary structure, homodimer. Requires pyridoxal 5'-phosphate as cofactor.

It localises to the cytoplasm. It carries out the reaction (6R)-5,10-methylene-5,6,7,8-tetrahydrofolate + glycine + H2O = (6S)-5,6,7,8-tetrahydrofolate + L-serine. Its pathway is one-carbon metabolism; tetrahydrofolate interconversion. It functions in the pathway amino-acid biosynthesis; glycine biosynthesis; glycine from L-serine: step 1/1. In terms of biological role, catalyzes the reversible interconversion of serine and glycine with tetrahydrofolate (THF) serving as the one-carbon carrier. This reaction serves as the major source of one-carbon groups required for the biosynthesis of purines, thymidylate, methionine, and other important biomolecules. Also exhibits THF-independent aldolase activity toward beta-hydroxyamino acids, producing glycine and aldehydes, via a retro-aldol mechanism. The chain is Serine hydroxymethyltransferase from Shewanella sp. (strain ANA-3).